The primary structure comprises 67 residues: MKTKDFRDMTDEELLKEIDGFKTELFNLRFQLATGQLDNPARIREVRKGIARGKTILRERELKINRA.

This sequence belongs to the universal ribosomal protein uL29 family.

This is Large ribosomal subunit protein uL29 from Desulfitobacterium hafniense (strain Y51).